Here is a 519-residue protein sequence, read N- to C-terminus: Amphoterin-induced protein 2 (519 aa).

The N-terminal stretch at 1–38 (MSLRFHTLPTLPRAVKPGCRELLCLLVIAVMVSPSASG) is a signal peptide. Positions 39 to 67 (MCPTACICATDIVSCTNKNLSKVPGNLFR) constitute an LRRNT domain. At 39–397 (MCPTACICAT…RSHAHEAFNT (359 aa)) the chain is on the extracellular side. 2 cysteine pairs are disulfide-bonded: Cys40–Cys46 and Cys44–Cys53. Asn57 carries N-linked (GlcNAc...) asparagine glycosylation. 6 LRR repeats span residues 68–89 (LIKR…WIPV), 93–114 (KLST…SFST), 117–138 (NLKC…TFQE), 141–162 (ALEV…AFGG), 165–186 (HLQK…LYTG), and 192–213 (DLTF…HINL). Residue Asn103 is glycosylated (N-linked (GlcNAc...) asparagine). The LRRCT domain maps to 227–283 (NPFVCDCSLYSLLIFWYRRHFSSVMDFKNDYTCRLWSDSRHSHQLQLLQESFLNCSY). 2 cysteine pairs are disulfide-bonded: Cys231–Cys259 and Cys233–Cys281. Asn280, Asn287, Asn344, Asn372, Asn380, Asn383, and Asn387 each carry an N-linked (GlcNAc...) asparagine glycan. One can recognise an Ig-like C2-type domain in the interval 288 to 378 (GSFHALGFIH…RLLNETVDIM (91 aa)). Cys309 and Cys362 are oxidised to a cystine. A helical membrane pass occupies residues 398 to 418 (AFTTLAACVASIVLVLLYLYL). Over 419–519 (TPCPCKCKAK…FSDTPFVAST (101 aa)) the chain is Cytoplasmic. The interval 498–519 (RAKSDSDSVNSVFSDTPFVAST) is disordered.

The protein belongs to the immunoglobulin superfamily. AMIGO family. As to quaternary structure, binds itself as well as AMIGO1 and AMIGO3. Highest level in cerebellum, retina, liver, and lung. Lower levels in cerebrum, kidney, small intestine, spleen and testis.

The protein localises to the cell membrane. It is found in the nucleus. In terms of biological role, required for depolarization-dependent survival of cultured cerebellar granule neurons. May mediate homophilic as well as heterophilic cell-cell interaction with AMIGO1 or AMIGO3. May contribute to signal transduction through its intracellular domain. The polypeptide is Amphoterin-induced protein 2 (Mus musculus (Mouse)).